The following is a 319-amino-acid chain: Malate dehydrogenase (319 aa).

NAD(+) contacts are provided by residues 10-15 and D34; that span reads GAGNIG. Positions 83 and 89 each coordinate substrate. NAD(+) is bound by residues N96 and 119–121; that span reads ITN. Substrate is bound by residues N121 and R152. The active-site Proton acceptor is the H176.

Belongs to the LDH/MDH superfamily. MDH type 3 family.

It catalyses the reaction (S)-malate + NAD(+) = oxaloacetate + NADH + H(+). Catalyzes the reversible oxidation of malate to oxaloacetate. The chain is Malate dehydrogenase from Francisella novicida.